We begin with the raw amino-acid sequence, 91 residues long: Dynein 8 kDa light chain, flagellar outer arm (91 aa).

The protein belongs to the dynein light chain family. Consists of at least 3 heavy chains (alpha, beta and gamma), 2 intermediate chains and 8 light chains.

Its subcellular location is the cytoplasm. It localises to the cytoskeleton. The protein localises to the flagellum axoneme. The sequence is that of Dynein 8 kDa light chain, flagellar outer arm from Chlamydomonas reinhardtii (Chlamydomonas smithii).